We begin with the raw amino-acid sequence, 502 residues long: mRNA cap guanine-N(7) methyltransferase (502 aa).

Residues 1 to 118 form a disordered region; it reads MADENPQAQG…SQQEEAMRFS (118 aa). Residues 93–115 show a composition bias toward basic and acidic residues; it reads LVDRETLRRRQEERERSQQEEAM. The mRNA cap 0 methyltransferase domain maps to 146-502; the sequence is SKIKGLRSFN…FYHAFCFYKV (357 aa). 155 to 156 serves as a coordination point for mRNA; it reads NN. S-adenosyl-L-methionine is bound by residues K159, G202, D226, D264, 307-309, and Y312; that span reads MFT. Positions 360-369 are enriched in basic and acidic residues; sequence ERETAAKKEE. Positions 360 to 381 are disordered; it reads ERETAAKKEEAEPEDGEVEEDD. The segment covering 370 to 381 has biased composition (acidic residues); sequence AEPEDGEVEEDD.

This sequence belongs to the class I-like SAM-binding methyltransferase superfamily. mRNA cap 0 methyltransferase family.

It is found in the nucleus. It carries out the reaction a 5'-end (5'-triphosphoguanosine)-ribonucleoside in mRNA + S-adenosyl-L-methionine = a 5'-end (N(7)-methyl 5'-triphosphoguanosine)-ribonucleoside in mRNA + S-adenosyl-L-homocysteine. Its function is as follows. Responsible for methylating the 5'-cap structure of mRNAs. The chain is mRNA cap guanine-N(7) methyltransferase (abd1) from Aspergillus oryzae (strain ATCC 42149 / RIB 40) (Yellow koji mold).